Consider the following 307-residue polypeptide: UDP-3-O-acyl-N-acetylglucosamine deacetylase (307 aa).

Residues His-78, His-241, and Asp-245 each coordinate Zn(2+). Residue His-268 is the Proton donor of the active site.

This sequence belongs to the LpxC family. Requires Zn(2+) as cofactor.

The enzyme catalyses a UDP-3-O-[(3R)-3-hydroxyacyl]-N-acetyl-alpha-D-glucosamine + H2O = a UDP-3-O-[(3R)-3-hydroxyacyl]-alpha-D-glucosamine + acetate. It participates in glycolipid biosynthesis; lipid IV(A) biosynthesis; lipid IV(A) from (3R)-3-hydroxytetradecanoyl-[acyl-carrier-protein] and UDP-N-acetyl-alpha-D-glucosamine: step 2/6. In terms of biological role, catalyzes the hydrolysis of UDP-3-O-myristoyl-N-acetylglucosamine to form UDP-3-O-myristoylglucosamine and acetate, the committed step in lipid A biosynthesis. The sequence is that of UDP-3-O-acyl-N-acetylglucosamine deacetylase from Delftia acidovorans (strain DSM 14801 / SPH-1).